The chain runs to 120 residues: Mating factor alpha-2 (120 aa).

A signal peptide spans 1–21 (MKFISTFLTFILAAVSVTASS). Propeptides lie at residues 22 to 86 (DEDI…VADA) and 102 to 107 (EANADA).

Its function is as follows. The active factor is excreted into the culture medium by haploid cells of the alpha mating type and acts on cells of the opposite mating type (type A). It mediates the conjugation process between the two types by inhibiting the initiation of DNA synthesis in type a cells and synchronizing them with type alpha. This chain is Mating factor alpha-2 (MF(ALPHA)2), found in Saccharomyces cerevisiae (strain ATCC 204508 / S288c) (Baker's yeast).